The chain runs to 463 residues: Mitochondrial dynamics protein MIEF1 (463 aa).

Residues 1 to 23 (MAGAGERKGKKDDNGIGTAIDFV) are Mitochondrial intermembrane-facing. Residues 24-46 (LSNARLVLGVGGAAMLGIATLAV) form a helical membrane-spanning segment. Residues 47-463 (KRMYDRAISA…LSEPEVLLQT (417 aa)) are Cytoplasmic-facing. The segment at 49–195 (MYDRAISAPT…LSGSLYDDLQ (147 aa)) is dimerization. Phosphoserine is present on residues serine 55, serine 59, serine 79, and serine 94. The disordered stretch occupies residues 57 to 77 (PTSPTRLSHSGKRSWEEPNWM). The tract at residues 96-123 (QTLPTDSSTFDTDTFCPPRPKPVARKGQ) is disordered. Residues 100–110 (TDSSTFDTDTF) are compositionally biased toward low complexity. The segment at 160 to 169 (AAVDICAELR) is important for interaction with DNM1L. The ADP site is built by serine 187, serine 189, and histidine 201. The tract at residues 234–242 (RRENPEYFP) is important for interaction with DNM1L. The ADP site is built by serine 340, arginine 342, and lysine 368.

Belongs to the SMCR7 family. Homodimer. Interacts with DNM1L. As to expression, expression is relatively high in heart, skeletal muscle, pancreas and kidney.

The protein localises to the mitochondrion outer membrane. Mitochondrial outer membrane protein which regulates mitochondrial fission/fusion dynamics. Promotes the recruitment and association of the fission mediator dynamin-related protein 1 (DNM1L) to the mitochondrial surface independently of the mitochondrial fission FIS1 and MFF proteins. Regulates DNM1L GTPase activity and DNM1L oligomerization. Binds ADP and can also bind GDP, although with lower affinity. Does not bind CDP, UDP, ATP, AMP or GTP. Inhibits DNM1L GTPase activity in the absence of bound ADP. Requires ADP to stimulate DNM1L GTPase activity and the assembly of DNM1L into long, oligomeric tubules with a spiral pattern, as opposed to the ring-like DNM1L oligomers observed in the absence of bound ADP. Does not require ADP for its function in recruiting DNM1L. The chain is Mitochondrial dynamics protein MIEF1 from Homo sapiens (Human).